A 471-amino-acid polypeptide reads, in one-letter code: MSAASEKPVVTRFAPSPTGYLHIGGARTALFNWLFARGRKGTFLLRIEDTDRERSTPEATDAILRGLTWLGLDWDGEVVSQFARKDRHAEVAREMLARGAAYKCFSTQDEIEAFREAARAEGRSTLFRSPWREADPSTHPDAPYVIRMKAPRTGETVIADRVQGTVRFQNETLDDMVVLRSDGTPTYMLAVVVDDHDMGVTHVIRGDDHLNNAARQTMVYEAMGWEVPIWAHIPLIHGPDGKKLSKRHGALGVEEYQAMGYPAAGMRNYLTRLGWAHGDDEFFTSEQAMAWFDLEGIGRSPARLDFKKLENVCGQHIAVMDDAAAMHEIQAYLAAARKPALTDLQAGRLSAALYALKDRAKTFPELLEKARFALESRPIAADDAAAKALDAVSRGILRELTPILQTASWSKQELEAALTAFAGEKGMGFGKLAGPLRAALAGRTVTPSVFDMMLVIGRDETIARLEDAAAA.

Residues 15 to 25 (PSPTGYLHIGG) carry the 'HIGH' region motif. A 'KMSKS' region motif is present at residues 243–247 (KLSKR). ATP is bound at residue Lys-246.

The protein belongs to the class-I aminoacyl-tRNA synthetase family. Glutamate--tRNA ligase type 1 subfamily. Monomer.

It localises to the cytoplasm. It carries out the reaction tRNA(Glu) + L-glutamate + ATP = L-glutamyl-tRNA(Glu) + AMP + diphosphate. Its function is as follows. Catalyzes the attachment of glutamate to tRNA(Glu) in a two-step reaction: glutamate is first activated by ATP to form Glu-AMP and then transferred to the acceptor end of tRNA(Glu). This Cereibacter sphaeroides (strain ATCC 17025 / ATH 2.4.3) (Rhodobacter sphaeroides) protein is Glutamate--tRNA ligase 2.